Reading from the N-terminus, the 142-residue chain is Alpha-lactalbumin (142 aa).

The N-terminal stretch at 1–19 is a signal peptide; the sequence is MMSFVSLLLVGILFHATQA. Positions 20-142 constitute a C-type lysozyme domain; that stretch reads EQLTKCEVFQ…KLDQWLCEKL (123 aa). Disulfide bonds link C25-C139, C47-C130, C80-C96, and C92-C110. N-linked (GlcNAc...) asparagine glycans are attached at residues N64 and N93. K98, D101, D103, D106, and D107 together coordinate Ca(2+).

This sequence belongs to the glycosyl hydrolase 22 family. As to quaternary structure, lactose synthase (LS) is a heterodimer of a catalytic component, beta1,4-galactosyltransferase (beta4Gal-T1) and a regulatory component, alpha-lactalbumin (LA). As to expression, mammary gland specific. Secreted in milk.

Its subcellular location is the secreted. In terms of biological role, regulatory subunit of lactose synthase, changes the substrate specificity of galactosyltransferase in the mammary gland making glucose a good acceptor substrate for this enzyme. This enables LS to synthesize lactose, the major carbohydrate component of milk. In other tissues, galactosyltransferase transfers galactose onto the N-acetylglucosamine of the oligosaccharide chains in glycoproteins. The protein is Alpha-lactalbumin (LALBA) of Ovis aries (Sheep).